The sequence spans 20 residues: Major extrapallial fluid protein (20 aa).

The segment at 1 to 20 (NPVDDHHDDHHDAPIVEHHD) is disordered.

In terms of assembly, homodimer. In terms of processing, glycosylated.

Functionally, appears to be a building block of the soluble organic matrix of the shell. The protein binds calcium. The polypeptide is Major extrapallial fluid protein (Mytilus edulis (Blue mussel)).